Reading from the N-terminus, the 262-residue chain is Acyl-[acyl-carrier-protein]--UDP-N-acetylglucosamine O-acyltransferase (262 aa).

The protein belongs to the transferase hexapeptide repeat family. LpxA subfamily. As to quaternary structure, homotrimer.

The protein localises to the cytoplasm. The enzyme catalyses a (3R)-hydroxyacyl-[ACP] + UDP-N-acetyl-alpha-D-glucosamine = a UDP-3-O-[(3R)-3-hydroxyacyl]-N-acetyl-alpha-D-glucosamine + holo-[ACP]. It functions in the pathway glycolipid biosynthesis; lipid IV(A) biosynthesis; lipid IV(A) from (3R)-3-hydroxytetradecanoyl-[acyl-carrier-protein] and UDP-N-acetyl-alpha-D-glucosamine: step 1/6. Its function is as follows. Involved in the biosynthesis of lipid A, a phosphorylated glycolipid that anchors the lipopolysaccharide to the outer membrane of the cell. This chain is Acyl-[acyl-carrier-protein]--UDP-N-acetylglucosamine O-acyltransferase, found in Verminephrobacter eiseniae (strain EF01-2).